A 130-amino-acid polypeptide reads, in one-letter code: Small ribosomal subunit protein uS8 (130 aa).

This sequence belongs to the universal ribosomal protein uS8 family. In terms of assembly, part of the 30S ribosomal subunit. Contacts proteins S5 and S12.

One of the primary rRNA binding proteins, it binds directly to 16S rRNA central domain where it helps coordinate assembly of the platform of the 30S subunit. The sequence is that of Small ribosomal subunit protein uS8 from Photorhabdus laumondii subsp. laumondii (strain DSM 15139 / CIP 105565 / TT01) (Photorhabdus luminescens subsp. laumondii).